The sequence spans 230 residues: Iron-dependent repressor IdeR (230 aa).

The region spanning 4–65 (LVDTTEMYLR…VAGDRHLELT (62 aa)) is the HTH dtxR-type domain.

Belongs to the DtxR/MntR family. As to quaternary structure, homodimer.

It is found in the cytoplasm. Metal-dependent DNA-binding protein that controls transcription of many genes involved in iron metabolism. This Mycobacterium bovis (strain ATCC BAA-935 / AF2122/97) protein is Iron-dependent repressor IdeR (ideR).